The sequence spans 158 residues: Transcription elongation factor GreA (158 aa).

The stretch at 8 to 74 (TKGGYNKLKD…TLERVLSTAT (67 aa)) forms a coiled coil.

It belongs to the GreA/GreB family.

Its function is as follows. Necessary for efficient RNA polymerase transcription elongation past template-encoded arresting sites. The arresting sites in DNA have the property of trapping a certain fraction of elongating RNA polymerases that pass through, resulting in locked ternary complexes. Cleavage of the nascent transcript by cleavage factors such as GreA or GreB allows the resumption of elongation from the new 3'terminus. GreA releases sequences of 2 to 3 nucleotides. The protein is Transcription elongation factor GreA of Chloroherpeton thalassium (strain ATCC 35110 / GB-78).